Here is a 1198-residue protein sequence, read N- to C-terminus: Integrator complex subunit 2 (1198 aa).

Residues 421 to 437 (FVSLSFCMLLAFSTLVS) form a helical membrane-spanning segment.

This sequence belongs to the Integrator subunit 2 family. In terms of assembly, component of the Integrator complex, composed of core subunits INTS1, INTS2, INTS3, INTS4, INTS5, INTS6, INTS7, INTS8, INTS9/RC74, INTS10, INTS11/CPSF3L, INTS12, INTS13, INTS14 and INTS15. The core complex associates with protein phosphatase 2A subunits PPP2CA and PPP2R1A, to form the Integrator-PP2A (INTAC) complex.

It localises to the nucleus. It is found in the nucleus membrane. The protein resides in the cytoplasm. In terms of biological role, component of the integrator complex, a multiprotein complex that terminates RNA polymerase II (Pol II) transcription in the promoter-proximal region of genes. The integrator complex provides a quality checkpoint during transcription elongation by driving premature transcription termination of transcripts that are unfavorably configured for transcriptional elongation: the complex terminates transcription by (1) catalyzing dephosphorylation of the C-terminal domain (CTD) of Pol II subunit POLR2A/RPB1 and SUPT5H/SPT5, (2) degrading the exiting nascent RNA transcript via endonuclease activity and (3) promoting the release of Pol II from bound DNA. The integrator complex is also involved in terminating the synthesis of non-coding Pol II transcripts, such as enhancer RNAs (eRNAs), small nuclear RNAs (snRNAs), telomerase RNAs and long non-coding RNAs (lncRNAs). Mediates recruitment of cytoplasmic dynein to the nuclear envelope, probably as component of the integrator complex. This Mus musculus (Mouse) protein is Integrator complex subunit 2 (Ints2).